Consider the following 308-residue polypeptide: Serine/threonine-protein phosphatase 4 catalytic subunit (308 aa).

Mn(2+) contacts are provided by Asp51, His53, Asp79, and Asn111. His112 serves as the catalytic Proton donor. Residues His161 and His235 each contribute to the Mn(2+) site.

Belongs to the PPP phosphatase family. PP-4 (PP-X) subfamily. As to quaternary structure, catalytic subunit of the histone H2A phosphatase complex (HTP-C) containing PPH3, PSY2 and PSY4. Inactivated in a complex with phosphatase methylesterase PPE1 (PP2Ai). Interacts with phosphatase 2A activator RRD1, which can reactivate PP2Ai by dissociating the catalytic subunit from the complex. Interacts with SPT5 and TAP42. It depends on Mn(2+) as a cofactor. In terms of processing, reversibly methyl esterified on Leu-308 by leucine carboxyl methyltransferase 1 (PPM1) and protein phosphatase methylesterase 1 (PPE1). Carboxyl methylation influences the affinity of the catalytic subunit for the different regulatory subunits, thereby modulating the PP2A holoenzyme's substrate specificity, enzyme activity and cellular localization.

The protein resides in the cytoplasm. It is found in the nucleus. The enzyme catalyses O-phospho-L-seryl-[protein] + H2O = L-seryl-[protein] + phosphate. The catalysed reaction is O-phospho-L-threonyl-[protein] + H2O = L-threonyl-[protein] + phosphate. Functionally, forms the histone H2A phosphatase complex in association with the regulatory subunits PSY2 and PSY4, which dephosphorylates H2AS128ph (gamma-H2A) that has been displaced from sites of DNA lesions in the double-stranded DNA break repair process. Dephosphorylation is necessary for efficient recovery from the DNA damage checkpoint. PPH3 is directly involved in the dephosphorylation and activation of the transcription factor GLN3 in response to nutrient availability. The chain is Serine/threonine-protein phosphatase 4 catalytic subunit (PPH3) from Saccharomyces cerevisiae (strain ATCC 204508 / S288c) (Baker's yeast).